The primary structure comprises 336 residues: N-acetyl-gamma-glutamyl-phosphate reductase (336 aa).

The active site involves Cys-156.

Belongs to the NAGSA dehydrogenase family. Type 1 subfamily.

It localises to the cytoplasm. It carries out the reaction N-acetyl-L-glutamate 5-semialdehyde + phosphate + NADP(+) = N-acetyl-L-glutamyl 5-phosphate + NADPH + H(+). It participates in amino-acid biosynthesis; L-arginine biosynthesis; N(2)-acetyl-L-ornithine from L-glutamate: step 3/4. In terms of biological role, catalyzes the NADPH-dependent reduction of N-acetyl-5-glutamyl phosphate to yield N-acetyl-L-glutamate 5-semialdehyde. In Moritella abyssi, this protein is N-acetyl-gamma-glutamyl-phosphate reductase.